Here is a 387-residue protein sequence, read N- to C-terminus: Large ribosomal subunit protein uL3 (387 aa).

Belongs to the universal ribosomal protein uL3 family.

It is found in the cytoplasm. The protein is Large ribosomal subunit protein uL3 (RPL3) of Candida glabrata (strain ATCC 2001 / BCRC 20586 / JCM 3761 / NBRC 0622 / NRRL Y-65 / CBS 138) (Yeast).